Reading from the N-terminus, the 428-residue chain is Enolase (428 aa).

Gln162 is a binding site for (2R)-2-phosphoglycerate. Glu204 functions as the Proton donor in the catalytic mechanism. Mg(2+)-binding residues include Asp241, Glu283, and Asp310. The (2R)-2-phosphoglycerate site is built by Lys335, Arg364, Ser365, and Lys386. Lys335 acts as the Proton acceptor in catalysis.

Belongs to the enolase family. It depends on Mg(2+) as a cofactor.

The protein localises to the cytoplasm. The protein resides in the secreted. It is found in the cell surface. The catalysed reaction is (2R)-2-phosphoglycerate = phosphoenolpyruvate + H2O. It functions in the pathway carbohydrate degradation; glycolysis; pyruvate from D-glyceraldehyde 3-phosphate: step 4/5. In terms of biological role, catalyzes the reversible conversion of 2-phosphoglycerate (2-PG) into phosphoenolpyruvate (PEP). It is essential for the degradation of carbohydrates via glycolysis. The sequence is that of Enolase from Rhodococcus erythropolis (strain PR4 / NBRC 100887).